Consider the following 376-residue polypeptide: Chaperone protein DnaJ (376 aa).

Positions 5-70 constitute a J domain; the sequence is DYYEILGVSK…QKRAAYDQYG (66 aa). The CR-type zinc-finger motif lies at 131–209; it reads GVTKEIRIPT…CHGHGRVERS (79 aa). Zn(2+)-binding residues include cysteine 144, cysteine 147, cysteine 161, cysteine 164, cysteine 183, cysteine 186, cysteine 197, and cysteine 200. CXXCXGXG motif repeat units follow at residues 144-151, 161-168, 183-190, and 197-204; these read CDVCHGSG, CPTCHGSG, CPHCQGRG, and CNKCHGHG.

The protein belongs to the DnaJ family. In terms of assembly, homodimer. The cofactor is Zn(2+).

The protein localises to the cytoplasm. Its function is as follows. Participates actively in the response to hyperosmotic and heat shock by preventing the aggregation of stress-denatured proteins and by disaggregating proteins, also in an autonomous, DnaK-independent fashion. Unfolded proteins bind initially to DnaJ; upon interaction with the DnaJ-bound protein, DnaK hydrolyzes its bound ATP, resulting in the formation of a stable complex. GrpE releases ADP from DnaK; ATP binding to DnaK triggers the release of the substrate protein, thus completing the reaction cycle. Several rounds of ATP-dependent interactions between DnaJ, DnaK and GrpE are required for fully efficient folding. Also involved, together with DnaK and GrpE, in the DNA replication of plasmids through activation of initiation proteins. The chain is Chaperone protein DnaJ from Escherichia coli (strain K12 / MC4100 / BW2952).